A 67-amino-acid polypeptide reads, in one-letter code: MPQLDTSTWFTTVLSTTITLFILMQLKISLHNFPQTPSVKSIKYMKTDNPWESKWTKIYSPLSLPLQ.

Residues 8-24 (TWFTTVLSTTITLFILM) traverse the membrane as a helical segment. Lys-54 carries the N6-acetyllysine; alternate modification. Position 54 is an N6-succinyllysine; alternate (Lys-54). Lys-57 carries the post-translational modification N6-acetyllysine.

This sequence belongs to the ATPase protein 8 family. F-type ATPases have 2 components, CF(1) - the catalytic core - and CF(0) - the membrane proton channel. Component of an ATP synthase complex composed of ATP5PB, ATP5MC1, ATP5F1E, ATP5PD, ATP5ME, ATP5PF, ATP5MF, MT-ATP6, MT-ATP8, ATP5F1A, ATP5F1B, ATP5F1D, ATP5F1C, ATP5PO, ATP5MG, ATP5MK and ATP5MJ. Interacts with PRICKLE3.

It localises to the mitochondrion membrane. Its function is as follows. Mitochondrial membrane ATP synthase (F(1)F(0) ATP synthase or Complex V) produces ATP from ADP in the presence of a proton gradient across the membrane which is generated by electron transport complexes of the respiratory chain. F-type ATPases consist of two structural domains, F(1) - containing the extramembraneous catalytic core and F(0) - containing the membrane proton channel, linked together by a central stalk and a peripheral stalk. During catalysis, ATP synthesis in the catalytic domain of F(1) is coupled via a rotary mechanism of the central stalk subunits to proton translocation. Part of the complex F(0) domain. Minor subunit located with subunit a in the membrane. The protein is ATP synthase protein 8 (MT-ATP8) of Microtus pennsylvanicus (Meadow vole).